The sequence spans 644 residues: CTP synthase (644 aa).

In terms of domain architecture, Glutamine amidotransferase type-1 spans 300–551 (SIAIVGKYTK…LGLILASVDR (252 aa)). Residues Cys-399, His-527, and Glu-529 each act as for GATase activity in the active site.

It belongs to the CTP synthase family.

The catalysed reaction is UTP + L-glutamine + ATP + H2O = CTP + L-glutamate + ADP + phosphate + 2 H(+). It participates in pyrimidine metabolism; CTP biosynthesis via de novo pathway; CTP from UDP: step 2/2. Catalyzes the ATP-dependent amination of UTP to CTP with either L-glutamine or ammonia as the source of nitrogen. Constitutes the rate-limiting enzyme in the synthesis of cytosine nucleotides. The polypeptide is CTP synthase (Drosophila pseudoobscura pseudoobscura (Fruit fly)).